The sequence spans 205 residues: Inactive ribonuclease-like protein 9 (205 aa).

The N-terminal stretch at 1-26 (MMRTLITTHPLPLLLLPQQLLQLVQF) is a signal peptide. 2 cysteine pairs are disulfide-bonded: Cys-116/Cys-168 and Cys-123/Cys-130. 2 N-linked (GlcNAc...) asparagine glycosylation sites follow: Asn-131 and Asn-143.

The protein belongs to the pancreatic ribonuclease family. In terms of tissue distribution, at the mRNA level, widely expressed. At protein level, restricted to epididymis. Expressed in spermatozoa (sperm head and neck), with higher levels on ejaculated and epididymal sperm than on testicular sperm (at protein level). Expressed in the epithelial cells of the epididymal tubule (at protein level). Not detected in muscle.

It localises to the secreted. In terms of biological role, does not exhibit any ribonuclease activity. This is Inactive ribonuclease-like protein 9 (RNASE9) from Homo sapiens (Human).